Consider the following 296-residue polypeptide: Thioredoxin-related transmembrane protein 2 (296 aa).

Positions 1–48 are cleaved as a signal peptide; the sequence is MAVLAPLIALVYSVPRLSRWLARPYYFLSALLSAAFLLVRKLPPVCES. The Extracellular portion of the chain corresponds to 49–102; that stretch reads LPTQREDGNPCDFDWREVEILMFLSAIVMMKNRRSITVEQHVGNIFMFSKVANA. Residues 103-125 traverse the membrane as a helical segment; that stretch reads ILFFRLDIRMGLLYITLCIVFLM. Residues 126–296 lie on the Cytoplasmic side of the membrane; it reads TCKPPLYMGP…VPDEESKKDK (171 aa). In terms of domain architecture, Thioredoxin spans 132–269; it reads YMGPEYIKYF…LYQRAKKLSK (138 aa). Residues Ser-211 and Ser-243 each carry the phosphoserine modification. The segment at 272–296 is disordered; that stretch reads DKIPEEQPVAAVPAAVPDEESKKDK. Over residues 277-287 the composition is skewed to low complexity; the sequence is EQPVAAVPAAV. A Di-lysine motif motif is present at residues 293-296; that stretch reads KKDK.

As to quaternary structure, monomer. Homodimer; disulfide-linked. Occurs in both reduced and oxidized monomeric form. Oxidative conditions increase homodimerization. Interacts with CANX. Interacts with ATP2A2.

The protein resides in the endoplasmic reticulum membrane. It is found in the mitochondrion membrane. Functionally, endoplasmic reticulum and mitochondria-associated protein that probably functions as a regulator of cellular redox state and thereby regulates protein post-translational modification, protein folding and mitochondrial activity. Indirectly regulates neuronal proliferation, migration, and organization in the developing brain. This is Thioredoxin-related transmembrane protein 2 (TMX2) from Bos taurus (Bovine).